Reading from the N-terminus, the 304-residue chain is Dermonecrotic toxin LlSicTox-betaIA1 (304 aa).

An N-terminal signal peptide occupies residues 1–21 (MLLSAVISFIGFAAFLQEANG). A propeptide spanning residues 22-26 (HVVER) is cleaved from the precursor. H38 is a catalytic residue. The Mg(2+) site is built by E58 and D60. Catalysis depends on H74, which acts as the Nucleophile. Cystine bridges form between C78-C84 and C80-C223. D118 lines the Mg(2+) pocket.

It belongs to the arthropod phospholipase D family. Class II subfamily. Class IIb sub-subfamily. Mg(2+) serves as cofactor. In terms of tissue distribution, expressed by the venom gland.

Its subcellular location is the secreted. The enzyme catalyses an N-(acyl)-sphingosylphosphocholine = an N-(acyl)-sphingosyl-1,3-cyclic phosphate + choline. It carries out the reaction an N-(acyl)-sphingosylphosphoethanolamine = an N-(acyl)-sphingosyl-1,3-cyclic phosphate + ethanolamine. The catalysed reaction is a 1-acyl-sn-glycero-3-phosphocholine = a 1-acyl-sn-glycero-2,3-cyclic phosphate + choline. It catalyses the reaction a 1-acyl-sn-glycero-3-phosphoethanolamine = a 1-acyl-sn-glycero-2,3-cyclic phosphate + ethanolamine. Dermonecrotic toxins cleave the phosphodiester linkage between the phosphate and headgroup of certain phospholipids (sphingolipid and lysolipid substrates), forming an alcohol (often choline) and a cyclic phosphate. This toxin acts on sphingomyelin (SM) with low activity. It may also act on ceramide phosphoethanolamine (CPE), lysophosphatidylcholine (LPC) and lysophosphatidylethanolamine (LPE), but not on lysophosphatidylserine (LPS), and lysophosphatidylglycerol (LPG). It acts by transphosphatidylation, releasing exclusively cyclic phosphate products as second products. Induces hemolysis, dermonecrosis, and edema. Also induces platelet aggregation. The protein is Dermonecrotic toxin LlSicTox-betaIA1 of Loxosceles laeta (South American recluse spider).